Consider the following 490-residue polypeptide: uncharacterized protein (490 aa).

The helical transmembrane segment at 27–47 threads the bilayer; sequence VYVFLTTIILLLSLISTLIII.

It localises to the membrane. This is an uncharacterized protein from Borreliella burgdorferi (strain ATCC 35210 / DSM 4680 / CIP 102532 / B31) (Borrelia burgdorferi).